Consider the following 185-residue polypeptide: Ribosome-recycling factor (185 aa).

The protein belongs to the RRF family.

It is found in the cytoplasm. Functionally, responsible for the release of ribosomes from messenger RNA at the termination of protein biosynthesis. May increase the efficiency of translation by recycling ribosomes from one round of translation to another. This is Ribosome-recycling factor from Clavibacter sepedonicus (Clavibacter michiganensis subsp. sepedonicus).